A 614-amino-acid polypeptide reads, in one-letter code: Kelch-like protein 40 (614 aa).

Residues isoleucine 33 to glutamate 100 enclose the BTB domain. The 103-residue stretch at cysteine 135–glutamate 237 folds into the BACK domain. Kelch repeat units lie at residues glutamine 353–asparagine 405, serine 406–asparagine 455, leucine 456–glycine 503, lysine 504–glycine 550, and leucine 552–leucine 606.

The protein belongs to the KLHL40 family. In terms of assembly, component of the BCR(KLHL40) E3 ubiquitin ligase complex.

It localises to the cytoplasm. The protein resides in the myofibril. Its subcellular location is the sarcomere. The protein localises to the a band. It is found in the i band. In terms of biological role, substrate-specific adapter of a BCR (BTB-CUL3-RBX1) E3 ubiquitin ligase complex that acts as a key regulator of skeletal muscle development. In Xenopus laevis (African clawed frog), this protein is Kelch-like protein 40 (klhl40).